A 228-amino-acid chain; its full sequence is L-ribulose-5-phosphate 4-epimerase UlaF (228 aa).

Residues 26–27 (GN), 43–44 (SG), and 72–73 (SS) each bind substrate. 3 residues coordinate Zn(2+): aspartate 74, histidine 93, and histidine 95. The active-site Proton donor/acceptor is the aspartate 118. Histidine 167 is a Zn(2+) binding site. Tyrosine 225 (proton donor/acceptor) is an active-site residue.

It belongs to the aldolase class II family. AraD/FucA subfamily. The cofactor is Zn(2+).

It catalyses the reaction L-ribulose 5-phosphate = D-xylulose 5-phosphate. The protein operates within cofactor degradation; L-ascorbate degradation; D-xylulose 5-phosphate from L-ascorbate: step 4/4. Functionally, catalyzes the isomerization of L-ribulose 5-phosphate to D-xylulose 5-phosphate. Is involved in the anaerobic L-ascorbate utilization. This chain is L-ribulose-5-phosphate 4-epimerase UlaF, found in Escherichia coli (strain 55989 / EAEC).